The primary structure comprises 175 residues: uncharacterized protein (175 aa).

An N-terminal signal peptide occupies residues 1-33; sequence MERLPYEIVSTIFRKAILHYVLIRGTTYPQSLA.

This is an uncharacterized protein from Methanocaldococcus jannaschii (strain ATCC 43067 / DSM 2661 / JAL-1 / JCM 10045 / NBRC 100440) (Methanococcus jannaschii).